The following is a 340-amino-acid chain: Armadillo repeat-containing protein 12 (340 aa).

The interval 1-101 (MGKSIPQYLG…SITRCVYLLE (101 aa)) is interaction with TBC1D15. ARM repeat units follow at residues 100–139 (LEAE…AFSG), 179–218 (LPDY…YLAQ), and 278–318 (SLHE…SLQY).

As to quaternary structure, interacts with TBC1D15, TBC1D21, GK2 and IMMT. Interacts with VDAC2 and VDAC3 in a TBC1D21-dependent manner. Interacts (via ARM domains) with RBBP4. Expressed in testis. Highly expressed in the mid-piece of the elongated and late spermatids. Expressed at higher levels in neuroblastoma tissues and cell lines, than those of normal dorsal ganglia (at protein level). Expressed in breast cancer, colon cancer, hepatocellular carcinoma, lung cancer, pancreas cancer, prostate cancer, renal cancer and gastric cancer, but not in their normal counterparts.

It is found in the nucleus. The protein localises to the mitochondrion outer membrane. Essential for male fertility and sperm mitochondrial sheath formation. Required for proper mitochondrial elongation and coiling along the flagellum during the formation of the mitochondrial sheath. Facilitates the growth and aggressiveness of neuroblastoma cells. Increases the EZH2 activity and H3K27me3 levels in a RBBP4-dependent manner, and facilitates the enrichment of polycomb repressive complex 2 and H3K27me3 on gene promoters, resulting in transcriptional repression of tumor suppressors affecting the proliferation, invasion, and metastasis of tumor cells. The protein is Armadillo repeat-containing protein 12 (ARMC12) of Homo sapiens (Human).